A 247-amino-acid chain; its full sequence is 4-nitrobenzoate reductase (247 aa).

29–33 (RRSVR) serves as a coordination point for FMN. S59, R112, Y120, and L126 together coordinate NADP(+). An FMN-binding site is contributed by R232.

The protein belongs to the nitroreductase family. It depends on FMN as a cofactor.

The catalysed reaction is 4-nitrobenzoate + 2 NADPH + 2 H(+) = 4-hydroxylaminobenzoate + 2 NADP(+) + H2O. Nitroreductase involved in the degradation of nitroaromatic compounds. Catalyzes the conversion of 4-nitrobenzoate to 4-hydroxylaminobenzoate. In Nocardioides sp. (strain LMS-CY), this protein is 4-nitrobenzoate reductase.